The following is a 376-amino-acid chain: Probable plastid-lipid-associated protein 3, chloroplastic (376 aa).

Residues 1-53 constitute a chloroplast transit peptide; it reads MATLFTVARPSSLLYVSSINPSKTFSPSISLKLNSLSFSFGYRPKPLRFSKIR. A disordered region spans residues 54–146; it reads SSLPSESESE…EADAGNGSAV (93 aa). Residues 85-96 show a composition bias toward polar residues; the sequence is PDSQPDNVTVNV. Residues 117-126 are compositionally biased toward basic and acidic residues; the sequence is MESDPPRNED.

The protein belongs to the PAP/fibrillin family.

Its subcellular location is the plastid. The protein localises to the chloroplast. It is found in the plastoglobule. Functionally, probably involved in light/cold stress-related jasmonate (JA) biosynthesis. The chain is Probable plastid-lipid-associated protein 3, chloroplastic (PAP3) from Arabidopsis thaliana (Mouse-ear cress).